The primary structure comprises 239 residues: Derlin-2 (239 aa).

Residues 1–57 lie on the Cytoplasmic side of the membrane; the sequence is MAYQSLRLEYLQIPPVSRAYTTACVLTTAAVQLELITPFQLYFNPELIFKHFQIWRL. Residues 58–78 traverse the membrane as a helical segment; sequence ITNFLFFGPVGFNFLFNMIFL. Residues 79-96 lie on the Lumenal side of the membrane; that stretch reads YRYCRMLEEGSFRGRTAD. A helical membrane pass occupies residues 97–117; that stretch reads FVFMFLFGGFLMTLFGLFVSL. At 118 to 150 the chain is on the cytoplasmic side; the sequence is VFLGQAFTIMLVYVWSRRNPYVRMNFFGLLNFQ. Residues 151–171 form a helical membrane-spanning segment; sequence APFLPWVLMGFSLLLGNSIIV. Residue Asp-172 is a topological domain, lumenal. The helical transmembrane segment at 173-193 threads the bilayer; sequence LLGIAVGHIYFFLEDIFPNQP. Topologically, residues 194–239 are cytoplasmic; it reads GGIRILKTPSILRTIFDTPDEDPNYNPLPEERPGGFAWGEGQRLGG. The disordered stretch occupies residues 214–239; the sequence is EDPNYNPLPEERPGGFAWGEGQRLGG. Over residues 229 to 239 the composition is skewed to gly residues; sequence FAWGEGQRLGG.

It belongs to the derlin family. As to quaternary structure, forms homo- and heterooligomers with DERL3 and, to a lesser extent, with DERL1. Interacts with the SEL1L/SYVN1 and VCP/SELENOS protein complexes. Mediates association between VCP and EDEM1, as well as that between VCP and the misfolded glycoproteins. Interacts with OS9. Interacts with SELENOK and SELENOS. Interacts with the signal recognition particle/SRP and the SRP receptor; in the process of endoplasmic reticulum stress-induced pre-emptive quality control. Interacts with CCDC47. In terms of tissue distribution, widely expressed, with lowest levels in brain and heart.

The protein resides in the endoplasmic reticulum membrane. Its function is as follows. Functional component of endoplasmic reticulum-associated degradation (ERAD) for misfolded lumenal glycoproteins, but not that of misfolded nonglycoproteins. May act by forming a channel that allows the retrotranslocation of misfolded glycoproteins into the cytosol where they are ubiquitinated and degraded by the proteasome. May mediate the interaction between VCP and misfolded glycoproteins. May also be involved in endoplasmic reticulum stress-induced pre-emptive quality control, a mechanism that selectively attenuates the translocation of newly synthesized proteins into the endoplasmic reticulum and reroutes them to the cytosol for proteasomal degradation. In Mus musculus (Mouse), this protein is Derlin-2.